We begin with the raw amino-acid sequence, 107 residues long: MSAIQPPKPVERKIELEPHQILLKPLVTEKGVHRATRNNQYAFQIHRDATKLDVKKAVEHLFDVKVLKVRTQTRKGKARRFKYKIGRTSDWKKAIVSLHEDHRIDFF.

Belongs to the universal ribosomal protein uL23 family. As to quaternary structure, part of the 50S ribosomal subunit. Contacts protein L29, and trigger factor when it is bound to the ribosome.

Its function is as follows. One of the early assembly proteins it binds 23S rRNA. One of the proteins that surrounds the polypeptide exit tunnel on the outside of the ribosome. Forms the main docking site for trigger factor binding to the ribosome. The chain is Large ribosomal subunit protein uL23 from Rhodopirellula baltica (strain DSM 10527 / NCIMB 13988 / SH1).